Here is a 100-residue protein sequence, read N- to C-terminus: NADH-quinone oxidoreductase subunit K (100 aa).

3 consecutive transmembrane segments (helical) span residues Leu4–Val24, Leu28–Val48, and Val60–Leu80.

It belongs to the complex I subunit 4L family. As to quaternary structure, NDH-1 is composed of 13 different subunits. Subunits NuoA, H, J, K, L, M, N constitute the membrane sector of the complex.

The protein localises to the cell inner membrane. The catalysed reaction is a quinone + NADH + 5 H(+)(in) = a quinol + NAD(+) + 4 H(+)(out). Functionally, NDH-1 shuttles electrons from NADH, via FMN and iron-sulfur (Fe-S) centers, to quinones in the respiratory chain. The immediate electron acceptor for the enzyme in this species is believed to be ubiquinone. Couples the redox reaction to proton translocation (for every two electrons transferred, four hydrogen ions are translocated across the cytoplasmic membrane), and thus conserves the redox energy in a proton gradient. The sequence is that of NADH-quinone oxidoreductase subunit K from Serratia proteamaculans (strain 568).